Consider the following 248-residue polypeptide: UPF0736 protein Bcer98_0893 (248 aa).

This sequence belongs to the UPF0736 family.

In Bacillus cytotoxicus (strain DSM 22905 / CIP 110041 / 391-98 / NVH 391-98), this protein is UPF0736 protein Bcer98_0893.